The primary structure comprises 299 residues: Bifunctional protein FolD (299 aa).

NADP(+)-binding positions include 166-168 (GRS), Ser191, and Ile232.

It belongs to the tetrahydrofolate dehydrogenase/cyclohydrolase family. As to quaternary structure, homodimer.

The catalysed reaction is (6R)-5,10-methylene-5,6,7,8-tetrahydrofolate + NADP(+) = (6R)-5,10-methenyltetrahydrofolate + NADPH. It catalyses the reaction (6R)-5,10-methenyltetrahydrofolate + H2O = (6R)-10-formyltetrahydrofolate + H(+). It participates in one-carbon metabolism; tetrahydrofolate interconversion. In terms of biological role, catalyzes the oxidation of 5,10-methylenetetrahydrofolate to 5,10-methenyltetrahydrofolate and then the hydrolysis of 5,10-methenyltetrahydrofolate to 10-formyltetrahydrofolate. This is Bifunctional protein FolD from Anaplasma marginale (strain St. Maries).